The sequence spans 780 residues: Tyrosine-protein phosphatase non-receptor type 12 (780 aa).

Met1 is modified (N-acetylmethionine). Ser19 is subject to Phosphoserine. A Tyrosine-protein phosphatase domain is found at 28 to 293; that stretch reads FARDFMRLRR…ELVHRAIAQL (266 aa). Residues Arg36, 63-67, Asp199, 231-237, and Gln278 each bind substrate; these read RYKDI and CSAGCGR. Residue Cys231 is the Phosphocysteine intermediate of the active site. A phosphoserine mark is found at Ser332, Ser435, Ser449, and Ser468. The interval 345–438 is interaction with TGFB1I1; it reads VEGDAKEEIL…KLERNLSFEI (94 aa). A compositionally biased stretch (polar residues) spans 502 to 519; sequence QSNKVSVTPPEESQNSDT. Disordered stretches follow at residues 502-639, 657-725, and 744-780; these read QSNK…STES, GTTH…EKCD, and SDKREQISENPTEATDIGFGNRCGKPKGPRDPPSEWT. A phosphothreonine mark is found at Thr509 and Thr519. Over residues 521-533 the composition is skewed to basic and acidic residues; sequence PRPDRLPLDEKGH. Composition is skewed to polar residues over residues 552 to 577 and 587 to 601; these read EGNSSDINYQTRKTVSLTPSPTTQVE and TSPLFRTPLSFTNPL. Ser567 carries the phosphoserine modification. Thr569 carries the post-translational modification Phosphothreonine. Phosphoserine is present on residues Ser571 and Ser596. Thr598 is modified (phosphothreonine). Basic and acidic residues predominate over residues 602–613; sequence HSDDSDSDERNS. 4 positions are modified to phosphoserine: Ser603, Ser606, Ser608, and Ser613. Over residues 622 to 639 the composition is skewed to low complexity; it reads TNISTASATVSAATSTES. Ser673 and Ser689 each carry phosphoserine. Residues 690–703 show a composition bias toward polar residues; sequence EHNTPVRSEWSELQ. Phosphothreonine is present on Thr693. 2 stretches are compositionally biased toward basic and acidic residues: residues 704 to 725 and 771 to 780; these read SQERSEQKKSEGLITSENEKCD and GPRDPPSEWT.

Belongs to the protein-tyrosine phosphatase family. Non-receptor class 4 subfamily. Interacts with TGFB1I1. Interacts with PSTPIP1. Interacts with PTK2B/PYK2. Interacts with LPXN. Interacts with SORBS2; this interaction greatly enhances WASF1 dephosphorylation and might mediate partial translocation to focal adhesion sites. In terms of processing, phosphorylated by STK24/MST3 and this results in inhibition of its activity.

It localises to the cytoplasm. The protein resides in the cell junction. The protein localises to the focal adhesion. It is found in the cell projection. Its subcellular location is the podosome. The enzyme catalyses O-phospho-L-tyrosyl-[protein] + H2O = L-tyrosyl-[protein] + phosphate. Dephosphorylates a range of proteins, and thereby regulates cellular signaling cascades. Dephosphorylates cellular tyrosine kinases, such as ERBB2 and PTK2B/PYK2, and thereby regulates signaling via ERBB2 and PTK2B/PYK2. Selectively dephosphorylates ERBB2 phosphorylated at 'Tyr-1112', 'Tyr-1196', and/or 'Tyr-1248'. In Homo sapiens (Human), this protein is Tyrosine-protein phosphatase non-receptor type 12 (PTPN12).